The following is a 309-amino-acid chain: 5-formyl-3-hydroxy-2-methylpyridine 4-carboxylate 5-dehydrogenase (309 aa).

NAD(+)-binding positions include 12–13 (TM), Asp32, 87–89 (VPE), and Lys94.

The protein belongs to the 3-hydroxyacyl-CoA dehydrogenase family. In terms of assembly, homodimer.

The catalysed reaction is 5-formyl-3-hydroxy-2-methylpyridine-4-carboxylate + NAD(+) + H2O = 5-hydroxy-6-methylpyridine-3,4-dicarboxylate + NADH + 2 H(+). It carries out the reaction 5-formyl-3-hydroxy-2-methylpyridine-4-carboxylate + NADH + H(+) = 4-pyridoxate + NAD(+). It functions in the pathway cofactor degradation; B6 vitamer degradation. In terms of biological role, involved in the degradation of pyridoxine (vitamin B(6)). Catalyzes the oxidation of 5-formyl-3-hydroxy-2-methylpyridine-4-carboxylate (FHMPC) by NAD(+) to 5-hydroxy-6-methylpyridine-3,4-dicarboxylate (HMPDC). Can also catalyze the reduction of FHMPC by NADH to 4-pyridoxic acid. In Mesorhizobium japonicum (strain LMG 29417 / CECT 9101 / MAFF 303099) (Mesorhizobium loti (strain MAFF 303099)), this protein is 5-formyl-3-hydroxy-2-methylpyridine 4-carboxylate 5-dehydrogenase.